The chain runs to 715 residues: ATP-dependent DNA helicase Hel308 (715 aa).

The Q motif signature appears at 1-29 (MKVEELRIDERIKEVLKKRGISELYPPQA). Residues Gln-28 and 46 to 53 (IPTASGKT) each bind ATP. The Helicase ATP-binding domain occupies 33–197 (TSGILKGENA…WLNAKLIKSD (165 aa)). Positions 145-148 (DEIH) match the DEAH box motif. Residues 229–422 (LVYDAIKRSK…ILRGQILALI (194 aa)) enclose the Helicase C-terminal domain.

It belongs to the helicase family. Hel308 subfamily. In terms of assembly, monomer.

It catalyses the reaction Couples ATP hydrolysis with the unwinding of duplex DNA by translocating in the 3'-5' direction.. It carries out the reaction ATP + H2O = ADP + phosphate + H(+). DNA-dependent ATPase and 3'-5' DNA helicase that may be involved in repair of stalled replication forks. This Pyrococcus horikoshii (strain ATCC 700860 / DSM 12428 / JCM 9974 / NBRC 100139 / OT-3) protein is ATP-dependent DNA helicase Hel308.